The sequence spans 418 residues: Putative ion-transport protein YfeO (418 aa).

The next 12 membrane-spanning stretches (helical) occupy residues 10–30 (LLLS…LIVV), 54–74 (DSPL…GLVI), 99–119 (ALPG…SLGP), 120–140 (EHPI…RLLP), 149–169 (ILAS…AALI), 186–206 (LFAP…FFHP), 223–243 (ILSG…AVWC), 258–278 (VLVL…GGPV), 300–320 (DYFL…ASGF), 322–342 (GGRI…LHEH), 343–363 (VPAV…VLVV), and 371–391 (LFMA…CIVM).

This sequence belongs to the chloride channel (TC 2.A.49) family.

Its subcellular location is the cell membrane. This Escherichia coli O8 (strain IAI1) protein is Putative ion-transport protein YfeO.